The chain runs to 59 residues: Cuticle protein 7 isoform b (59 aa).

Glutamine 1 carries the post-translational modification Pyrrolidone carboxylic acid.

This chain is Cuticle protein 7 isoform b, found in Limulus polyphemus (Atlantic horseshoe crab).